The following is a 67-amino-acid chain: Small ribosomal subunit protein eS17 (67 aa).

Belongs to the eukaryotic ribosomal protein eS17 family. Part of the 30S ribosomal subunit.

The polypeptide is Small ribosomal subunit protein eS17 (Pyrococcus furiosus (strain ATCC 43587 / DSM 3638 / JCM 8422 / Vc1)).